Consider the following 523-residue polypeptide: GMP synthase [glutamine-hydrolyzing] (523 aa).

The region spanning 8 to 205 is the Glutamine amidotransferase type-1 domain; that stretch reads RILILDFGSQ…IRELCECEAL (198 aa). Cys85 acts as the Nucleophile in catalysis. Active-site residues include His179 and Glu181. Residues 206–398 enclose the GMPS ATP-PPase domain; sequence WTPSNIISDA…LGLPYDMVYR (193 aa). 233–239 contacts ATP; sequence SGGVDSS.

Homodimer.

The enzyme catalyses XMP + L-glutamine + ATP + H2O = GMP + L-glutamate + AMP + diphosphate + 2 H(+). It participates in purine metabolism; GMP biosynthesis; GMP from XMP (L-Gln route): step 1/1. Catalyzes the synthesis of GMP from XMP. The sequence is that of GMP synthase [glutamine-hydrolyzing] from Alcanivorax borkumensis (strain ATCC 700651 / DSM 11573 / NCIMB 13689 / SK2).